The following is a 293-amino-acid chain: Cell wall protein PGA31 (293 aa).

The signal sequence occupies residues 1-18 (MKFLTAASLLTLSSSALA). N-linked (GlcNAc...) asparagine glycosylation is present at Asn131. Residues 161-187 (ESASSSSSSAAPEPTASSSEAPKETPV) form a disordered region. The segment covering 163-180 (ASSSSSSAAPEPTASSSE) has biased composition (low complexity). N-linked (GlcNAc...) asparagine glycosylation occurs at Asn190. The tract at residues 233–262 (VPSKTASSEAAPPKTTVDSVSKPAPSGKKP) is disordered. Residue Gly271 is the site of GPI-anchor amidated glycine attachment. Residues 272-293 (AANALTGGSVAIAVAAAIGLVF) constitute a propeptide, removed in mature form.

This sequence belongs to the SRP1/TIP1 family. The GPI-anchor is attached to the protein in the endoplasmic reticulum and serves to target the protein to the cell surface. There, the glucosamine-inositol phospholipid moiety is cleaved off and the GPI-modified mannoprotein is covalently attached via its lipidless GPI glycan remnant to the 1,6-beta-glucan of the outer cell wall layer.

It is found in the secreted. The protein localises to the cell wall. The protein resides in the membrane. Functionally, component of the cell wall involved in virulence which plays a role in the relationship between C.albicans and the host. Involved in the regulation or assembly of chitin within the cell wall. This Candida albicans (strain SC5314 / ATCC MYA-2876) (Yeast) protein is Cell wall protein PGA31 (PGA31).